The sequence spans 96 residues: Co-chaperonin GroES (96 aa).

This sequence belongs to the GroES chaperonin family. Heptamer of 7 subunits arranged in a ring. Interacts with the chaperonin GroEL.

It is found in the cytoplasm. Together with the chaperonin GroEL, plays an essential role in assisting protein folding. The GroEL-GroES system forms a nano-cage that allows encapsulation of the non-native substrate proteins and provides a physical environment optimized to promote and accelerate protein folding. GroES binds to the apical surface of the GroEL ring, thereby capping the opening of the GroEL channel. This is Co-chaperonin GroES from Leptothrix cholodnii (strain ATCC 51168 / LMG 8142 / SP-6) (Leptothrix discophora (strain SP-6)).